The following is a 527-amino-acid chain: Peptidoglycan O-acetyltransferase (527 aa).

11 consecutive transmembrane segments (helical) span residues 11–31 (VFVLLFNTPLFIFAFLPVGFL), 55–75 (LFFYAFWNVKYLPLLVGSIVF), 96–116 (LILGLIANVSLLGFFKYTDFF), 131–151 (LHLILPLAISFFTLQQIAYLM), 187–207 (HFLDYALFVSFFPQLIAGPIV), 228–248 (NIALGLFIFSIGLFKKVVIAD), 280–300 (LYFDFSGYCDMAIGIGLFFNI), 352–372 (LILVFLIGGFWHGAGWTFIIW), 397–417 (MPKILAWLITFNFINLAWVFF), 463–483 (IMYASPTFKMCVLMIIISFCL), and 505–525 (LLLSIGFLFIFASSQSVFLYF). H363 is an active-site residue.

Belongs to the membrane-bound acyltransferase family.

It localises to the cell membrane. Functionally, catalyzes the O-acetylation of peptidoglycan (PG), an important mechanism that appears to confer lysozyme resistance and contributes to pathogen persistence in the host. This Helicobacter pylori (strain ATCC 700392 / 26695) (Campylobacter pylori) protein is Peptidoglycan O-acetyltransferase (patA).